The chain runs to 420 residues: 4-hydroxy-3-methylbut-2-en-1-yl diphosphate synthase (flavodoxin) (420 aa).

[4Fe-4S] cluster is bound by residues cysteine 307, cysteine 310, cysteine 353, and glutamate 360.

This sequence belongs to the IspG family. [4Fe-4S] cluster is required as a cofactor.

The catalysed reaction is (2E)-4-hydroxy-3-methylbut-2-enyl diphosphate + oxidized [flavodoxin] + H2O + 2 H(+) = 2-C-methyl-D-erythritol 2,4-cyclic diphosphate + reduced [flavodoxin]. It functions in the pathway isoprenoid biosynthesis; isopentenyl diphosphate biosynthesis via DXP pathway; isopentenyl diphosphate from 1-deoxy-D-xylulose 5-phosphate: step 5/6. Functionally, converts 2C-methyl-D-erythritol 2,4-cyclodiphosphate (ME-2,4cPP) into 1-hydroxy-2-methyl-2-(E)-butenyl 4-diphosphate. The chain is 4-hydroxy-3-methylbut-2-en-1-yl diphosphate synthase (flavodoxin) from Brucella suis (strain ATCC 23445 / NCTC 10510).